We begin with the raw amino-acid sequence, 616 residues long: UDP-sugar pyrophosphorylase (616 aa).

It belongs to the USP family. The cofactor is Mg(2+). Mn(2+) is required as a cofactor.

It carries out the reaction a monosaccharide 1-phosphate + UTP + H(+) = a UDP-monosaccharide + diphosphate. Functionally, may function as the terminal enzyme of the myo-inositol oxidation (MIO) pathway. May also play a role in the salvage pathway for synthesis of nucleotide sugars. The protein is UDP-sugar pyrophosphorylase (USP) of Oryza sativa subsp. indica (Rice).